Reading from the N-terminus, the 203-residue chain is ATP-dependent Clp protease proteolytic subunit 1 (203 aa).

S98 serves as the catalytic Nucleophile. Residue H123 is part of the active site.

This sequence belongs to the peptidase S14 family. As to quaternary structure, fourteen ClpP subunits assemble into 2 heptameric rings which stack back to back to give a disk-like structure with a central cavity, resembling the structure of eukaryotic proteasomes.

It is found in the cytoplasm. The catalysed reaction is Hydrolysis of proteins to small peptides in the presence of ATP and magnesium. alpha-casein is the usual test substrate. In the absence of ATP, only oligopeptides shorter than five residues are hydrolyzed (such as succinyl-Leu-Tyr-|-NHMec, and Leu-Tyr-Leu-|-Tyr-Trp, in which cleavage of the -Tyr-|-Leu- and -Tyr-|-Trp bonds also occurs).. Cleaves peptides in various proteins in a process that requires ATP hydrolysis. Has a chymotrypsin-like activity. Plays a major role in the degradation of misfolded proteins. This is ATP-dependent Clp protease proteolytic subunit 1 from Chlamydia felis (strain Fe/C-56) (Chlamydophila felis).